The chain runs to 72 residues: Prophage late control protein OgrK (72 aa).

Its function is as follows. Cryptic version of the phage P2 OGR protein which acts as an activator of P2 late transcription. The polypeptide is Prophage late control protein OgrK (ogrK) (Escherichia coli (strain K12)).